The chain runs to 100 residues: NADH-quinone oxidoreductase subunit K 2 (100 aa).

3 consecutive transmembrane segments (helical) span residues leucine 4 to leucine 24, isoleucine 28 to alanine 48, and isoleucine 60 to leucine 80.

This sequence belongs to the complex I subunit 4L family. NDH-1 is composed of 14 different subunits. Subunits NuoA, H, J, K, L, M, N constitute the membrane sector of the complex.

The protein resides in the cell inner membrane. It catalyses the reaction a quinone + NADH + 5 H(+)(in) = a quinol + NAD(+) + 4 H(+)(out). Functionally, NDH-1 shuttles electrons from NADH, via FMN and iron-sulfur (Fe-S) centers, to quinones in the respiratory chain. The immediate electron acceptor for the enzyme in this species is believed to be ubiquinone. Couples the redox reaction to proton translocation (for every two electrons transferred, four hydrogen ions are translocated across the cytoplasmic membrane), and thus conserves the redox energy in a proton gradient. This is NADH-quinone oxidoreductase subunit K 2 from Rhizobium meliloti (strain 1021) (Ensifer meliloti).